The chain runs to 936 residues: Protein translocase subunit SecA (936 aa).

Residues glutamine 87, 105–109 (GEGKT), and aspartate 515 contribute to the ATP site. Zn(2+) contacts are provided by cysteine 920, cysteine 922, cysteine 931, and histidine 932.

The protein belongs to the SecA family. Monomer and homodimer. Part of the essential Sec protein translocation apparatus which comprises SecA, SecYEG and auxiliary proteins SecDF-YajC and YidC. It depends on Zn(2+) as a cofactor.

It is found in the cell inner membrane. Its subcellular location is the cytoplasm. It catalyses the reaction ATP + H2O + cellular proteinSide 1 = ADP + phosphate + cellular proteinSide 2.. Functionally, part of the Sec protein translocase complex. Interacts with the SecYEG preprotein conducting channel. Has a central role in coupling the hydrolysis of ATP to the transfer of proteins into and across the cell membrane, serving both as a receptor for the preprotein-SecB complex and as an ATP-driven molecular motor driving the stepwise translocation of polypeptide chains across the membrane. This is Protein translocase subunit SecA from Paraburkholderia xenovorans (strain LB400).